The primary structure comprises 283 residues: MNHIPVLSSELISGLVIRPRGLYLDATLGFGGHTKLILAAAPEVKVVAIDQDKQALDSSQTLLASYNSNIQFCHSNFADYDPQNLKFDGILADLGINSVQLDTPERGFSFRHQGKLDMRMNQQQTITAAKIINHWEEVKLANIFYTYGEERLSRRIARKIIESRPLETTTELAEVVANCVPYKYRYGRIHPATRVFQALRIEVNQELSRLETFLKNAPHWLKIGGRIGIISFHSLEDRLVKHSLRNASILKVLTKKPIQPQDNEVAINPRARSAKLRLAEKLS.

S-adenosyl-L-methionine contacts are provided by residues 31-33, Asp50, Phe77, Asp93, and Gln100; that span reads GGH.

The protein belongs to the methyltransferase superfamily. RsmH family.

It localises to the cytoplasm. It carries out the reaction cytidine(1402) in 16S rRNA + S-adenosyl-L-methionine = N(4)-methylcytidine(1402) in 16S rRNA + S-adenosyl-L-homocysteine + H(+). Specifically methylates the N4 position of cytidine in position 1402 (C1402) of 16S rRNA. The polypeptide is Ribosomal RNA small subunit methyltransferase H (Trichodesmium erythraeum (strain IMS101)).